Here is a 377-residue protein sequence, read N- to C-terminus: Aquaporin-2 (377 aa).

Over 1 to 14 the chain is Cytoplasmic; that stretch reads MAANKGINGGIKNH. A helical membrane pass occupies residues 15–35; sequence FIAFLGEFVGTFLFLFFAYGG. At 36-56 the chain is on the extracellular side; it reads TQTANQTSQKNPSIVASPDIN. A glycan (N-linked (GlcNAc...) asparagine) is linked at asparagine 40. The chain crosses the membrane as a helical span at residues 57 to 77; that stretch reads QLLYIALIFGFSLTVNVWIFF. Over 78–87 the chain is Cytoplasmic; it reads RVSGGLFNPA. Positions 85 to 87 match the NPA 1 motif; that stretch reads NPA. Residues 88–108 form a helical membrane-spanning segment; it reads VTIALCLVGVVGPVRSIFIFI. The Extracellular portion of the chain corresponds to 109–144; that stretch reads AQVVASIAAAAAVRGLLPGDTVLFSCALAPGTSIAQ. The chain crosses the membrane as a helical span at residues 145 to 165; that stretch reads GLFLEMFFTIELVFTILMLAA. Residues 166–171 lie on the Cytoplasmic side of the membrane; it reads EKTKVT. The chain crosses the membrane as a helical span at residues 172-192; sequence FVAPVGIGLSLFVAELMGVAW. Residues 193 to 215 are Extracellular-facing; the sequence is TGGALNPARAFGAEVIGGFRGYH. Residues 198-200 carry the NPA 2 motif; sequence NPA. The chain crosses the membrane as a helical span at residues 216–236; sequence WIYWLGPLMGAVLAAGFYKVI. Residues 237 to 377 are Cytoplasmic-facing; it reads KFLNYEQVNG…ANAQNRAKTP (141 aa). Disordered stretches follow at residues 278 to 332 and 358 to 377; these read LFQT…RENE and RLSG…AKTP. Polar residues-rich tracts occupy residues 315–328 and 368–377; these read PAQQ…ASTI and ANAQNRAKTP.

This sequence belongs to the MIP/aquaporin (TC 1.A.8) family.

It is found in the membrane. The catalysed reaction is H2O(in) = H2O(out). It catalyses the reaction glycerol(in) = glycerol(out). Functionally, water channel required to facilitate the transport of water across membranes. Involved in conidiation. In Botryotinia fuckeliana (strain B05.10) (Noble rot fungus), this protein is Aquaporin-2.